The chain runs to 268 residues: Indole-3-glycerol phosphate synthase (268 aa).

The protein belongs to the TrpC family.

It carries out the reaction 1-(2-carboxyphenylamino)-1-deoxy-D-ribulose 5-phosphate + H(+) = (1S,2R)-1-C-(indol-3-yl)glycerol 3-phosphate + CO2 + H2O. It participates in amino-acid biosynthesis; L-tryptophan biosynthesis; L-tryptophan from chorismate: step 4/5. The polypeptide is Indole-3-glycerol phosphate synthase (Acinetobacter baumannii (strain AB0057)).